The sequence spans 247 residues: NADH dehydrogenase [ubiquinone] flavoprotein 2, mitochondrial (247 aa).

The transit peptide at 1–40 directs the protein to the mitochondrion; the sequence is MFRSLLKRTTFLNQLNKSNGFNRNYFKQSTLTRSDALSRH. [2Fe-2S] cluster is bound by residues C135, C140, C176, and C180. The disordered stretch occupies residues 211 to 247; that stretch reads NKPTKIGPQTHRKAAEGPQGKTTLLEPPVGPTCRDDL.

The protein belongs to the complex I 24 kDa subunit family. Complex I is composed of 45 different subunits. This is a component of the flavoprotein-sulfur (FP) fragment of the enzyme. The cofactor is [2Fe-2S] cluster.

The protein localises to the mitochondrion inner membrane. The enzyme catalyses a ubiquinone + NADH + 5 H(+)(in) = a ubiquinol + NAD(+) + 4 H(+)(out). Core subunit of the mitochondrial membrane respiratory chain NADH dehydrogenase (Complex I) that is believed to belong to the minimal assembly required for catalysis. Complex I functions in the transfer of electrons from NADH to the respiratory chain. The immediate electron acceptor for the enzyme is believed to be ubiquinone. The polypeptide is NADH dehydrogenase [ubiquinone] flavoprotein 2, mitochondrial (ndufv2) (Dictyostelium discoideum (Social amoeba)).